Here is a 134-residue protein sequence, read N- to C-terminus: 6,7-dimethyl-8-ribityllumazine synthase (134 aa).

Residues F12, 44-46 (VFD), and 68-70 (SVI) each bind 5-amino-6-(D-ribitylamino)uracil. 73 to 74 (ET) is a binding site for (2S)-2-hydroxy-3-oxobutyl phosphate. Residue H76 is the Proton donor of the active site. L101 contacts 5-amino-6-(D-ribitylamino)uracil. (2S)-2-hydroxy-3-oxobutyl phosphate is bound at residue R116.

It belongs to the DMRL synthase family.

The enzyme catalyses (2S)-2-hydroxy-3-oxobutyl phosphate + 5-amino-6-(D-ribitylamino)uracil = 6,7-dimethyl-8-(1-D-ribityl)lumazine + phosphate + 2 H2O + H(+). Its pathway is cofactor biosynthesis; riboflavin biosynthesis; riboflavin from 2-hydroxy-3-oxobutyl phosphate and 5-amino-6-(D-ribitylamino)uracil: step 1/2. In terms of biological role, catalyzes the formation of 6,7-dimethyl-8-ribityllumazine by condensation of 5-amino-6-(D-ribitylamino)uracil with 3,4-dihydroxy-2-butanone 4-phosphate. This is the penultimate step in the biosynthesis of riboflavin. The sequence is that of 6,7-dimethyl-8-ribityllumazine synthase from Methanosarcina acetivorans (strain ATCC 35395 / DSM 2834 / JCM 12185 / C2A).